A 122-amino-acid chain; its full sequence is Large ribosomal subunit protein uL14 (122 aa).

The protein belongs to the universal ribosomal protein uL14 family. In terms of assembly, part of the 50S ribosomal subunit. Forms a cluster with proteins L3 and L19. In the 70S ribosome, L14 and L19 interact and together make contacts with the 16S rRNA in bridges B5 and B8.

Functionally, binds to 23S rRNA. Forms part of two intersubunit bridges in the 70S ribosome. The chain is Large ribosomal subunit protein uL14 from Mycobacterium marinum (strain ATCC BAA-535 / M).